The following is a 202-amino-acid chain: Na(+)-translocating NADH-quinone reductase subunit E (202 aa).

A run of 6 helical transmembrane segments spans residues 11-31 (SVFI…FIAV), 35-55 (IETA…TVPA), 81-101 (FIAL…LEMV), 114-134 (GIFL…LFMI), 144-164 (VVYG…MAGV), and 180-200 (LGIT…FSGI).

This sequence belongs to the NqrDE/RnfAE family. Composed of six subunits; NqrA, NqrB, NqrC, NqrD, NqrE and NqrF.

Its subcellular location is the cell inner membrane. It carries out the reaction a ubiquinone + n Na(+)(in) + NADH + H(+) = a ubiquinol + n Na(+)(out) + NAD(+). Functionally, NQR complex catalyzes the reduction of ubiquinone-1 to ubiquinol by two successive reactions, coupled with the transport of Na(+) ions from the cytoplasm to the periplasm. NqrA to NqrE are probably involved in the second step, the conversion of ubisemiquinone to ubiquinol. The chain is Na(+)-translocating NADH-quinone reductase subunit E from Methylococcus capsulatus (strain ATCC 33009 / NCIMB 11132 / Bath).